The chain runs to 1100 residues: Isoleucine--tRNA ligase (1100 aa).

The 'HIGH' region signature appears at 48 to 58 (PFATGLPHFGH). The 'KMSKS' region signature appears at 626–630 (KMSKS). ATP is bound at residue Lys-629.

This sequence belongs to the class-I aminoacyl-tRNA synthetase family. IleS type 2 subfamily. As to quaternary structure, monomer. Requires Zn(2+) as cofactor.

The protein resides in the cytoplasm. The enzyme catalyses tRNA(Ile) + L-isoleucine + ATP = L-isoleucyl-tRNA(Ile) + AMP + diphosphate. Catalyzes the attachment of isoleucine to tRNA(Ile). As IleRS can inadvertently accommodate and process structurally similar amino acids such as valine, to avoid such errors it has two additional distinct tRNA(Ile)-dependent editing activities. One activity is designated as 'pretransfer' editing and involves the hydrolysis of activated Val-AMP. The other activity is designated 'posttransfer' editing and involves deacylation of mischarged Val-tRNA(Ile). The protein is Isoleucine--tRNA ligase of Treponema denticola (strain ATCC 35405 / DSM 14222 / CIP 103919 / JCM 8153 / KCTC 15104).